We begin with the raw amino-acid sequence, 66 residues long: Dermaseptin PD-3-7 (66 aa).

The signal sequence occupies residues 1-22; it reads MSFMKKSLLLVLFLGVVSLSNC. A propeptide spanning residues 23-40 is cleaved from the precursor; the sequence is EEEKGENENEDHEEHHEE.

In terms of tissue distribution, expressed by the skin glands.

The protein resides in the secreted. Possesses a potent antimicrobial activity against Gram-positive and Gram-negative bacteria. Probably acts by disturbing membrane functions with its amphipathic structure. In Agalychnis dacnicolor (Giant Mexican leaf frog), this protein is Dermaseptin PD-3-7.